Here is a 608-residue protein sequence, read N- to C-terminus: Altered inheritance of mitochondria protein 9, mitochondrial (608 aa).

The transit peptide at 1–21 directs the protein to the mitochondrion; sequence MLRRIVNTGTKRLFRVPPRSS.

The protein belongs to the AIM9 family.

It localises to the mitochondrion. The protein is Altered inheritance of mitochondria protein 9, mitochondrial (AIM9) of Clavispora lusitaniae (strain ATCC 42720) (Yeast).